Here is a 212-residue protein sequence, read N- to C-terminus: Fe/S biogenesis protein NfuA (212 aa).

Positions 169 and 172 each coordinate [4Fe-4S] cluster.

This sequence belongs to the NfuA family. In terms of assembly, homodimer. Requires [4Fe-4S] cluster as cofactor.

Its function is as follows. Involved in iron-sulfur cluster biogenesis. Binds a 4Fe-4S cluster, can transfer this cluster to apoproteins, and thereby intervenes in the maturation of Fe/S proteins. Could also act as a scaffold/chaperone for damaged Fe/S proteins. This Acinetobacter baumannii (strain SDF) protein is Fe/S biogenesis protein NfuA.